The sequence spans 683 residues: Long-chain-fatty-acid--CoA ligase 5 (683 aa).

Residues 12-32 (LPTPALICLLTFGTAIFLWLI) traverse the membrane as a helical; Signal-anchor for type III membrane protein segment. Residues 33–683 (NRPQPVLPLI…IKSLYESIEE (651 aa)) are Cytoplasmic-facing. Lysine 361 is subject to N6-acetyllysine.

It belongs to the ATP-dependent AMP-binding enzyme family.

It is found in the mitochondrion. The protein resides in the endoplasmic reticulum. Its subcellular location is the mitochondrion outer membrane. It localises to the endoplasmic reticulum membrane. The protein localises to the cell membrane. The enzyme catalyses a long-chain fatty acid + ATP + CoA = a long-chain fatty acyl-CoA + AMP + diphosphate. It catalyses the reaction (5Z,8Z,11Z,14Z)-eicosatetraenoate + ATP + CoA = (5Z,8Z,11Z,14Z)-eicosatetraenoyl-CoA + AMP + diphosphate. The catalysed reaction is hexadecanoate + ATP + CoA = hexadecanoyl-CoA + AMP + diphosphate. It carries out the reaction (E)-hexadec-2-enoate + ATP + CoA = (2E)-hexadecenoyl-CoA + AMP + diphosphate. The enzyme catalyses 15-hydroxy-(5Z,8Z,11Z,13E)-eicosatetraenoate + ATP + CoA = 15-hydroxy-(5Z,8Z,11Z,13E)-eicosatetraenoyl-CoA + AMP + diphosphate. It catalyses the reaction 12-hydroxy-(5Z,8Z,10E,14Z)-eicosatetraenoate + ATP + CoA = 12-hydroxy-(5Z,8Z,10E,14Z)-eicosatetraenoyl-CoA + AMP + diphosphate. The catalysed reaction is 5-hydroxy-(6E,8Z,11Z,14Z)-eicosatetraenoate + ATP + CoA = 5-hydroxy-(6E,8Z,11Z,14Z)-eicosatetraenoyl-CoA + AMP + diphosphate. It carries out the reaction 14,15-epoxy-(5Z,8Z,11Z)-eicosatrienoate + ATP + CoA = 14,15-epoxy-(5Z,8Z,11Z)-eicosatrienoyl-CoA + AMP + diphosphate. The enzyme catalyses 11,12-epoxy-(5Z,8Z,14Z)-eicosatrienoate + ATP + CoA = 11,12-epoxy-(5Z,8Z,14Z)-eicosatrienoyl-CoA + AMP + diphosphate. It catalyses the reaction (9Z)-octadecenoate + ATP + CoA = (9Z)-octadecenoyl-CoA + AMP + diphosphate. Its function is as follows. Catalyzes the conversion of long-chain fatty acids to their active form acyl-CoAs for both synthesis of cellular lipids, and degradation via beta-oxidation. ACSL5 may activate fatty acids from exogenous sources for the synthesis of triacylglycerol destined for intracellular storage. It was suggested that it may also stimulate fatty acid oxidation. At the villus tip of the crypt-villus axis of the small intestine may sensitize epithelial cells to apoptosis specifically triggered by the death ligand TRAIL. May have a role in the survival of glioma cells. Utilizes a wide range of saturated fatty acids with a preference for C16-C18 unsaturated fatty acids. This chain is Long-chain-fatty-acid--CoA ligase 5, found in Mus musculus (Mouse).